The following is a 244-amino-acid chain: Tabinhibitin 8 (244 aa).

The N-terminal stretch at 1–23 is a signal peptide; sequence MTSILVSRFKISALTLQYATSDS. Residues 67–194 enclose the SCP domain; sequence YTGGGIIVLR…KTPLFFSSNC (128 aa). The short motif at 143 to 145 is the Cell attachment site element; it reads RGD.

The protein belongs to the CRISP family. Expressed in salivary glands.

Its subcellular location is the secreted. Functionally, inhibits platelet aggregation induced by all agonists tested (ADP, arachidonic acid, the thromboxane A2 analog U46619, thrombin, and snake venom snaclecs (TMVA that activates platelet through GPIB, and stejnulxin that specifically acts through GPVI (GP6))). May act by competing with fibrinogen for binding to glycoprotein IIb/IIIa (ITGA2B/ITGB3). The chain is Tabinhibitin 8 from Tabanus yao (Horsefly).